The following is a 1247-amino-acid chain: Leucine-rich repeat-containing protein 53 (1247 aa).

7 LRR repeats span residues 34 to 55 (TTRV…NLSL), 58 to 79 (NLAL…ALHG), 82 to 102 (MLRT…TDHT), 108 to 129 (SLQV…WFRN), 132 to 153 (GLTR…SFGG), 158 to 179 (SLRY…AFRP), and 182 to 203 (QLQE…FTPL). The region spanning 214–271 (NQWSCTCDLHPLARFLRNYIKSSAHTLRNAKDLNCQPSTAAVAAAQSVLRLSETNCDS) is the LRRCT domain. A helical membrane pass occupies residues 294–314 (LLTVLGFAGAVGLTCLGLVVF). Disordered stretches follow at residues 828-866 (SAGH…EDAT), 887-927 (VLPF…SPRN), and 1223-1247 (ENSA…LETE). Polar residues-rich tracts occupy residues 898–927 (DQGT…SPRN) and 1238–1247 (YATTSPLETE).

The protein resides in the membrane. In Homo sapiens (Human), this protein is Leucine-rich repeat-containing protein 53 (LRRC53).